We begin with the raw amino-acid sequence, 281 residues long: Very long chain fatty acid elongase 7 (281 aa).

Residue A2 is modified to N-acetylalanine. At 2 to 27 the chain is on the lumenal side; that stretch reads AFSDLTSRTVRLYDNWIKDADPRVED. A helical transmembrane segment spans residues 28–48; that stretch reads WLLMSSPLPQTIILGFYVYFV. Topologically, residues 49–66 are cytoplasmic; it reads TSLGPKLMENRKPFELKK. Residues 67–87 traverse the membrane as a helical segment; it reads VMITYNFSIVLFSVYMFYEFI. At 88-115 the chain is on the lumenal side; the sequence is MSGWGTGYSFRCDIVDYSQSPTALRMVR. The cysteines at positions 99 and 231 are disulfide-linked. The helical transmembrane segment at 116-136 threads the bilayer; that stretch reads TCWLYYFSKFIELLDTIFFIL. The 3-oxoeicosanoyl-CoA site is built by K124, R137, K139, Q142, and H147. At 137–142 the chain is on the cytoplasmic side; the sequence is RKKNSQ. A helical transmembrane segment spans residues 143–162; the sequence is VTFLHVFHHTIMPWTWWFGV. The HxxHH motif signature appears at 147–151; the sequence is HVFHH. H150 (nucleophile) is an active-site residue. Over 163-171 the chain is Lumenal; sequence KFAAGGLGT. A helical membrane pass occupies residues 172–194; that stretch reads FHAFLNTAVHVVMYSYYGLCALG. 3-oxoeicosanoyl-CoA-binding residues include Y187, K204, T208, and Q211. The Cytoplasmic portion of the chain corresponds to 195-206; it reads PDYQKYLWWKKY. A helical transmembrane segment spans residues 207-227; that stretch reads LTSLQLIQFVLITIHISQFFF. At 228 to 236 the chain is on the lumenal side; it reads MEDCKYQFP. Residues 237-257 traverse the membrane as a helical segment; that stretch reads VFQYIIMSYGCIFLLLFLHFW. Residues 258-281 lie on the Cytoplasmic side of the membrane; that stretch reads YRAYTKGQRLPKTVKHGICKNKDH. R266 is a 3-oxoeicosanoyl-CoA binding site. The Di-lysine motif motif lies at 277–281; it reads KNKDH.

This sequence belongs to the ELO family. ELOVL7 subfamily. Homodimer. Interacts with TECR.

It is found in the endoplasmic reticulum membrane. The catalysed reaction is a very-long-chain acyl-CoA + malonyl-CoA + H(+) = a very-long-chain 3-oxoacyl-CoA + CO2 + CoA. It carries out the reaction eicosanoyl-CoA + malonyl-CoA + H(+) = 3-oxodocosanoyl-CoA + CO2 + CoA. The enzyme catalyses (5Z,8Z,11Z,14Z)-eicosatetraenoyl-CoA + malonyl-CoA + H(+) = (7Z,10Z,13Z,16Z)-3-oxodocosatetraenoyl-CoA + CO2 + CoA. It catalyses the reaction (6Z,9Z,12Z)-octadecatrienoyl-CoA + malonyl-CoA + H(+) = (8Z,11Z,14Z)-3-oxoeicosatrienoyl-CoA + CO2 + CoA. The catalysed reaction is (9Z,12Z)-octadecadienoyl-CoA + malonyl-CoA + H(+) = (11Z,14Z)-3-oxoicosa-11,14-dienoyl-CoA + CO2 + CoA. It carries out the reaction (9Z)-octadecenoyl-CoA + malonyl-CoA + H(+) = 3-oxo-(11Z)-eicosenoyl-CoA + CO2 + CoA. The enzyme catalyses octadecanoyl-CoA + malonyl-CoA + H(+) = 3-oxoeicosanoyl-CoA + CO2 + CoA. It catalyses the reaction hexadecanoyl-CoA + malonyl-CoA + H(+) = 3-oxooctadecanoyl-CoA + CO2 + CoA. The catalysed reaction is (9Z,12Z,15Z)-octadecatrienoyl-CoA + malonyl-CoA + H(+) = (11Z,14Z,17Z)-3-oxoeicosatrienoyl-CoA + CO2 + CoA. It participates in lipid metabolism; fatty acid biosynthesis. Its function is as follows. Catalyzes the first and rate-limiting reaction of the four reactions that constitute the long-chain fatty acids elongation cycle. This endoplasmic reticulum-bound enzymatic process allows the addition of 2 carbons to the chain of long- and very long-chain fatty acids (VLCFAs) per cycle. Condensing enzyme with higher activity toward C18 acyl-CoAs, especially C18:3(n-3) acyl-CoAs and C18:3(n-6)-CoAs. Also active toward C20:4-, C18:0-, C18:1-, C18:2- and C16:0-CoAs, and weakly toward C20:0-CoA. Little or no activity toward C22:0-, C24:0-, or C26:0-CoAs. May participate in the production of saturated and polyunsaturated VLCFAs of different chain lengths that are involved in multiple biological processes as precursors of membrane lipids and lipid mediators. The protein is Very long chain fatty acid elongase 7 of Bos taurus (Bovine).